Reading from the N-terminus, the 884-residue chain is Formin-like protein 11 (884 aa).

An N-terminal signal peptide occupies residues 1 to 18 (MVYFRQIFLMIIVVSLHC). The disordered stretch occupies residues 89–143 (AESASFSPWPAPSPSPFPNGGPIESPAYPPAPPRPIPPHLRRPLPQRTHPLEQPE). Composition is skewed to pro residues over residues 97–107 (WPAPSPSPFPN) and 115–126 (AYPPAPPRPIPP). Residues 158–178 (ILVPVVASTASAIGFVVCVVG) traverse the membrane as a helical segment. 3 disordered regions span residues 307–384 (SSDD…FSNK), 416–469 (SFPI…APLP), and 512–532 (MQSSTKNEEGKSKTPSPGKHL). Residues 329 to 343 (SNASSASGSVNVGSS) show a composition bias toward low complexity. A compositionally biased stretch (basic and acidic residues) spans 346 to 358 (FSEHKLDIPECSR). Composition is skewed to pro residues over residues 367–379 (APPPPPPPPPPLP) and 425–436 (QPRPPPPPPPPQ). One can recognise an FH2 domain in the interval 461–884 (LGKDGAPLPK…NSPSPLAPFR (424 aa)).

The protein belongs to the formin-like family. Class-I subfamily.

Its subcellular location is the membrane. Might be involved in the organization and polarity of the actin cytoskeleton. The protein is Formin-like protein 11 (FH11) of Arabidopsis thaliana (Mouse-ear cress).